Here is a 162-residue protein sequence, read N- to C-terminus: Chemoreceptor glutamine deamidase CheD (162 aa).

Belongs to the CheD family. As to quaternary structure, forms a complex with CheC.

The catalysed reaction is L-glutaminyl-[protein] + H2O = L-glutamyl-[protein] + NH4(+). In terms of biological role, deamidates glutamine residues to glutamate on methyl-accepting chemotaxis receptors (MCPs). CheD-mediated MCP deamidation is required for productive communication of the conformational signals of the chemoreceptors to the CheA kinase. This chain is Chemoreceptor glutamine deamidase CheD, found in Halalkalibacterium halodurans (strain ATCC BAA-125 / DSM 18197 / FERM 7344 / JCM 9153 / C-125) (Bacillus halodurans).